The sequence spans 313 residues: Heterogeneous nuclear ribonucleoproteins C1/C2 (313 aa).

An N-acetylalanine modification is found at A2. Glycyl lysine isopeptide (Lys-Gly) (interchain with G-Cter in SUMO2) cross-links involve residues K8, K50, K89, and K94. One can recognise an RRM domain in the interval 16–87 (SRVFIGNLNT…QVLDINLAAE (72 aa)). Phosphoserine is present on residues S113, S115, and S121. Disordered regions lie at residues 139 to 191 (YPAR…KLKG) and 219 to 313 (EKEQ…EDDS). The Nuclear localization signal motif lies at 155–161 (PSKRQRV). A phosphoserine mark is found at S162 and S166. Positions 175-186 (SKSGQRGSSSKS) are enriched in low complexity. At K176 the chain carries N6-acetyllysine; alternate. A Glycyl lysine isopeptide (Lys-Gly) (interchain with G-Cter in SUMO2); alternate cross-link involves residue K176. The stretch at 191 to 226 (GDDLQAIKKELTQIKQKVDSLLESLEKIEKEQSKQA) forms a coiled coil. Residue K224 forms a Glycyl lysine isopeptide (Lys-Gly) (interchain with G-Cter in SUMO2) linkage. 3 positions are modified to phosphoserine: S229, S231, and S232. K237 participates in a covalent cross-link: Glycyl lysine isopeptide (Lys-Gly) (interchain with G-Cter in SUMO2). K240 is covalently cross-linked (Glycyl lysine isopeptide (Lys-Gly) (interchain with G-Cter in SUMO2); alternate). K240 is covalently cross-linked (Glycyl lysine isopeptide (Lys-Gly) (interchain with G-Cter in SUMO1); alternate). S241, S246, S247, and S249 each carry phosphoserine. Residues 250 to 261 (VKKDETNVKMES) show a composition bias toward basic and acidic residues. Residues K251 and K252 each participate in a glycyl lysine isopeptide (Lys-Gly) (interchain with G-Cter in SUMO2) cross-link. Residue K258 forms a Glycyl lysine isopeptide (Lys-Gly) (interchain with G-Cter in SUMO2); alternate linkage. K258 participates in a covalent cross-link: Glycyl lysine isopeptide (Lys-Gly) (interchain with G-Cter in SUMO); alternate. A phosphoserine mark is found at S261 and S268. A compositionally biased stretch (acidic residues) spans 263–284 (AGADDSAEEGDLLDDDDNEDRG). Residues 285-294 (DDQLELKDDE) show a composition bias toward basic and acidic residues. Acidic residues predominate over residues 295 to 313 (KEPEEGEDDRDSANGEDDS). Phosphoserine occurs at positions 306 and 313.

This sequence belongs to the RRM HNRPC family. RALY subfamily. Tetramer composed of 3 copies of isoform C1 and 1 copy of isoform C2. Assembly of 3 tetramers with bound pre-mRNA gives rise to a 19S complex that interacts with HNRNPA2B1 tetramers. Component of the 40S hnRNP particle. Identified in the spliceosome C complex. Interacts with IGF2BP1. Interacts with DHX9; this interaction is direct, enhanced probably by their concomitant binding to RNA and mediates the attachment to actin filaments. Interacts with PPIA/CYPA. In terms of processing, phosphorylated on Ser-268 and Ser-306 in resting cells. Post-translationally, sumoylated. Sumoylation reduces affinity for mRNA. Ubiquitinated and degraded after nucleo-cytoplasmic transport by YWHAE.

It is found in the nucleus. In terms of biological role, binds pre-mRNA and nucleates the assembly of 40S hnRNP particles. Interacts with poly-U tracts in the 3'-UTR or 5'-UTR of mRNA and modulates the stability and the level of translation of bound mRNA molecules. Single HNRNPC tetramers bind 230-240 nucleotides. Trimers of HNRNPC tetramers bind 700 nucleotides. May play a role in the early steps of spliceosome assembly and pre-mRNA splicing. N6-methyladenosine (m6A) has been shown to alter the local structure in mRNAs and long non-coding RNAs (lncRNAs) via a mechanism named 'm(6)A-switch', facilitating binding of HNRNPC, leading to regulation of mRNA splicing. This Mus musculus (Mouse) protein is Heterogeneous nuclear ribonucleoproteins C1/C2 (Hnrnpc).